Consider the following 339-residue polypeptide: MKKENPLAIVILAAGKGTRMKSELAKVLHPVFGRPMIQHVLASTAGLPSDKRIIIIGHQRHAVREALADDACTFVVQEEQLGTAHAVLTAKEAIADDCEDVMILCGDTPLISGQSLEEMYDRHRTNSATVTLMTTQLGDPTNYGRIISDNAGNLLRIVEEKDADPAEKRIKEINAGIYCVRRDFLYRALQKVENNNSQGELYLTDIIDLAVKSEQKVQRYLAPEPKDVLGVNSRIELAMADEELRMRRNREVMLTGVSMILPATIMISSQSEIGFDSLVGAGVELRGHCQIGSNCKIDTGAILTNCKMESGSHVGAYSVLTGCTVAADEKIPAQQREEE.

The tract at residues 1–234 (MKKENPLAIV…PKDVLGVNSR (234 aa)) is pyrophosphorylase. UDP-N-acetyl-alpha-D-glucosamine is bound by residues 12-15 (LAAG), lysine 26, glutamine 77, and 82-83 (GT). Position 107 (aspartate 107) interacts with Mg(2+). UDP-N-acetyl-alpha-D-glucosamine contacts are provided by glycine 144, glutamate 159, asparagine 174, and asparagine 232. Mg(2+) is bound at residue asparagine 232. Positions 235–255 (IELAMADEELRMRRNREVMLT) are linker. Residues 256 to 339 (GVSMILPATI…KIPAQQREEE (84 aa)) are N-acetyltransferase.

Belongs to the N-acetylglucosamine-1-phosphate uridyltransferase family. Homotrimer. The cofactor is Mg(2+).

The protein resides in the cytoplasm. It carries out the reaction alpha-D-glucosamine 1-phosphate + acetyl-CoA = N-acetyl-alpha-D-glucosamine 1-phosphate + CoA + H(+). The enzyme catalyses N-acetyl-alpha-D-glucosamine 1-phosphate + UTP + H(+) = UDP-N-acetyl-alpha-D-glucosamine + diphosphate. The protein operates within nucleotide-sugar biosynthesis; UDP-N-acetyl-alpha-D-glucosamine biosynthesis; N-acetyl-alpha-D-glucosamine 1-phosphate from alpha-D-glucosamine 6-phosphate (route II): step 2/2. Its pathway is nucleotide-sugar biosynthesis; UDP-N-acetyl-alpha-D-glucosamine biosynthesis; UDP-N-acetyl-alpha-D-glucosamine from N-acetyl-alpha-D-glucosamine 1-phosphate: step 1/1. It participates in bacterial outer membrane biogenesis; LPS lipid A biosynthesis. Its function is as follows. Catalyzes the last two sequential reactions in the de novo biosynthetic pathway for UDP-N-acetylglucosamine (UDP-GlcNAc). The C-terminal domain catalyzes the transfer of acetyl group from acetyl coenzyme A to glucosamine-1-phosphate (GlcN-1-P) to produce N-acetylglucosamine-1-phosphate (GlcNAc-1-P), which is converted into UDP-GlcNAc by the transfer of uridine 5-monophosphate (from uridine 5-triphosphate), a reaction catalyzed by the N-terminal domain. The sequence is that of Bifunctional protein GlmU (glmU) from Desulfotalea psychrophila (strain LSv54 / DSM 12343).